Here is an 85-residue protein sequence, read N- to C-terminus: uncharacterized protein (85 aa).

2 helical membrane-spanning segments follow: residues 13–35 (KWLA…FQPL) and 59–81 (EGIV…HLLL).

It is found in the cell membrane. This is an uncharacterized protein from Archaeoglobus fulgidus (strain ATCC 49558 / DSM 4304 / JCM 9628 / NBRC 100126 / VC-16).